We begin with the raw amino-acid sequence, 480 residues long: UDP-glucose 6-dehydrogenase 2 (480 aa).

NAD(+) is bound by residues 8-13 (GAGYVG), Asp-33, Arg-38, 86-90 (VNTPT), 127-128 (ST), and Glu-161. Substrate is bound by residues 157–161 (EFLAE), 216–223 (KLAANAFL), and 256–269 (RIGPKFLNSSVGFG). Cys-272 (nucleophile) is an active-site residue. 272-275 (CFQK) is a binding site for NAD(+). 334-335 (FK) is a binding site for substrate. Residue Arg-342 participates in NAD(+) binding. Residue Arg-447 coordinates substrate.

This sequence belongs to the UDP-glucose/GDP-mannose dehydrogenase family. In terms of tissue distribution, preferentially expressed in roots.

It catalyses the reaction UDP-alpha-D-glucose + 2 NAD(+) + H2O = UDP-alpha-D-glucuronate + 2 NADH + 3 H(+). The protein operates within nucleotide-sugar biosynthesis; UDP-alpha-D-glucuronate biosynthesis; UDP-alpha-D-glucuronate from UDP-alpha-D-glucose: step 1/1. With respect to regulation, inhibited by UDP-xylose. Functionally, involved in the biosynthesis of UDP-glucuronic acid (UDP-GlcA), providing nucleotide sugars for cell-wall polymers. Required for the formation of cell wall ingrowths on the outer cell walls of nematode-induced syncytia. The polypeptide is UDP-glucose 6-dehydrogenase 2 (UGD2) (Arabidopsis thaliana (Mouse-ear cress)).